Here is a 306-residue protein sequence, read N- to C-terminus: Phosphatidylserine decarboxylase proenzyme (306 aa).

Active-site charge relay system; for autoendoproteolytic cleavage activity residues include Asp-98, His-155, and Ser-259. The active-site Schiff-base intermediate with substrate; via pyruvic acid; for decarboxylase activity is Ser-259. The residue at position 259 (Ser-259) is a Pyruvic acid (Ser); by autocatalysis.

This sequence belongs to the phosphatidylserine decarboxylase family. PSD-B subfamily. Prokaryotic type I sub-subfamily. As to quaternary structure, heterodimer of a large membrane-associated beta subunit and a small pyruvoyl-containing alpha subunit. Pyruvate serves as cofactor. Is synthesized initially as an inactive proenzyme. Formation of the active enzyme involves a self-maturation process in which the active site pyruvoyl group is generated from an internal serine residue via an autocatalytic post-translational modification. Two non-identical subunits are generated from the proenzyme in this reaction, and the pyruvate is formed at the N-terminus of the alpha chain, which is derived from the carboxyl end of the proenzyme. The autoendoproteolytic cleavage occurs by a canonical serine protease mechanism, in which the side chain hydroxyl group of the serine supplies its oxygen atom to form the C-terminus of the beta chain, while the remainder of the serine residue undergoes an oxidative deamination to produce ammonia and the pyruvoyl prosthetic group on the alpha chain. During this reaction, the Ser that is part of the protease active site of the proenzyme becomes the pyruvoyl prosthetic group, which constitutes an essential element of the active site of the mature decarboxylase.

The protein resides in the cell membrane. The catalysed reaction is a 1,2-diacyl-sn-glycero-3-phospho-L-serine + H(+) = a 1,2-diacyl-sn-glycero-3-phosphoethanolamine + CO2. It functions in the pathway phospholipid metabolism; phosphatidylethanolamine biosynthesis; phosphatidylethanolamine from CDP-diacylglycerol: step 2/2. Catalyzes the formation of phosphatidylethanolamine (PtdEtn) from phosphatidylserine (PtdSer). In Nitrosococcus oceani (strain ATCC 19707 / BCRC 17464 / JCM 30415 / NCIMB 11848 / C-107), this protein is Phosphatidylserine decarboxylase proenzyme.